A 1336-amino-acid chain; its full sequence is DNA-directed RNA polymerase subunit beta' (1336 aa).

Zn(2+) is bound by residues Cys-60, Cys-62, Cys-75, and Cys-78. Mg(2+) is bound by residues Asp-535, Asp-537, and Asp-539. Zn(2+) contacts are provided by Cys-902, Cys-984, Cys-991, and Cys-994.

It belongs to the RNA polymerase beta' chain family. As to quaternary structure, the RNAP catalytic core consists of 2 alpha, 1 beta, 1 beta' and 1 omega subunit. When a sigma factor is associated with the core the holoenzyme is formed, which can initiate transcription. Mg(2+) is required as a cofactor. The cofactor is Zn(2+).

It carries out the reaction RNA(n) + a ribonucleoside 5'-triphosphate = RNA(n+1) + diphosphate. In terms of biological role, DNA-dependent RNA polymerase catalyzes the transcription of DNA into RNA using the four ribonucleoside triphosphates as substrates. This chain is DNA-directed RNA polymerase subunit beta', found in Corynebacterium diphtheriae (strain ATCC 700971 / NCTC 13129 / Biotype gravis).